A 576-amino-acid polypeptide reads, in one-letter code: Proteinaceous RNase P 3 (576 aa).

Residues 65-75 are compositionally biased toward basic and acidic residues; sequence NRRSRHDDESP. A disordered region spans residues 65-88; that stretch reads NRRSRHDDESPKNPNKKKKGNRNP. PPR repeat units lie at residues 88-123, 129-166, 167-201, and 204-238; these read PEKS…DIRL, QSLL…GISP, NESS…GGVS, and RLRT…GIVL. A PRORP domain is found at 335-570; the sequence is SSAGKCLSCD…KEESLRSWMC (236 aa). Zn(2+)-binding residues include Cys-340 and Cys-343. Positions 402, 480, 481, and 499 each coordinate Mn(2+). Zn(2+) is bound by residues His-553 and Cys-570.

This sequence belongs to the PPR family. P subfamily. Requires Mg(2+) as cofactor. The cofactor is Mn(2+).

Its subcellular location is the nucleus. It catalyses the reaction Endonucleolytic cleavage of RNA, removing 5'-extranucleotides from tRNA precursor.. Functionally, endonuclease RNase P responsible for the 5' maturation of tRNA precursors. Also involved in the maturation of mRNA and small nucleolar RNA (snoRNA). This is Proteinaceous RNase P 3 (PRORP3) from Arabidopsis thaliana (Mouse-ear cress).